Consider the following 110-residue polypeptide: SOSS complex subunit C (110 aa).

The protein belongs to the SOSS-C family. As to quaternary structure, belongs to the multiprotein complex Integrator. Component of the SOSS complex, composed of soss-b (soss-b1/nabp2 or soss-b2/nabp1), soss-a/ints3 and soss-c/inip.

Its subcellular location is the nucleus. In terms of biological role, component of the SOSS complex, a multiprotein complex that functions downstream of the MRN complex to promote DNA repair and G2/M checkpoint. The SOSS complex associates with single-stranded DNA at DNA lesions and influences diverse endpoints in the cellular DNA damage response including cell-cycle checkpoint activation, recombinational repair and maintenance of genomic stability. Required for efficient homologous recombination-dependent repair of double-strand breaks (DSBs). The polypeptide is SOSS complex subunit C (inip) (Xenopus laevis (African clawed frog)).